The sequence spans 103 residues: Pyrimidine/purine nucleoside phosphorylase (103 aa).

It belongs to the nucleoside phosphorylase PpnP family.

It carries out the reaction a purine D-ribonucleoside + phosphate = a purine nucleobase + alpha-D-ribose 1-phosphate. It catalyses the reaction adenosine + phosphate = alpha-D-ribose 1-phosphate + adenine. The catalysed reaction is cytidine + phosphate = cytosine + alpha-D-ribose 1-phosphate. The enzyme catalyses guanosine + phosphate = alpha-D-ribose 1-phosphate + guanine. It carries out the reaction inosine + phosphate = alpha-D-ribose 1-phosphate + hypoxanthine. It catalyses the reaction thymidine + phosphate = 2-deoxy-alpha-D-ribose 1-phosphate + thymine. The catalysed reaction is uridine + phosphate = alpha-D-ribose 1-phosphate + uracil. The enzyme catalyses xanthosine + phosphate = alpha-D-ribose 1-phosphate + xanthine. Its function is as follows. Catalyzes the phosphorolysis of diverse nucleosides, yielding D-ribose 1-phosphate and the respective free bases. Can use uridine, adenosine, guanosine, cytidine, thymidine, inosine and xanthosine as substrates. Also catalyzes the reverse reactions. This is Pyrimidine/purine nucleoside phosphorylase from Geobacter sp. (strain M21).